Consider the following 396-residue polypeptide: ATP-dependent RNA helicase eIF4A (396 aa).

A Q motif motif is present at residues 22-50; it reads YSFDDLKLKEELLRGIFGYGFVEPSAIQQ. A Helicase ATP-binding domain is found at 53 to 223; it reads ILPIIEGKDV…SKFMKDPVRI (171 aa). 66 to 73 serves as a coordination point for ATP; it reads AQSGTGKT. Residues 171–174 carry the DEAD box motif; that stretch reads DEAD. The region spanning 234-395 is the Helicase C-terminal domain; it reads GIGQYYVNVE…ELPSSISELF (162 aa).

This sequence belongs to the DEAD box helicase family. eIF4A subfamily. Component of the eIF4F complex, which composition varies with external and internal environmental conditions. It is composed of at least eIF4A, eIF4E and eIF4G.

It localises to the cytoplasm. The enzyme catalyses ATP + H2O = ADP + phosphate + H(+). In terms of biological role, ATP-dependent RNA helicase which is a subunit of the eIF4F complex involved in cap recognition and is required for mRNA binding to ribosome. In the current model of translation initiation, eIF4A unwinds RNA secondary structures in the 5'-UTR of mRNAs which is necessary to allow efficient binding of the small ribosomal subunit, and subsequent scanning for the initiator codon. The protein is ATP-dependent RNA helicase eIF4A (TIF1) of Kluyveromyces lactis (strain ATCC 8585 / CBS 2359 / DSM 70799 / NBRC 1267 / NRRL Y-1140 / WM37) (Yeast).